A 123-amino-acid chain; its full sequence is uncharacterized protein (123 aa).

A helical membrane pass occupies residues 1–21 (MHIIAKSILLMAVSFLVIIFT).

It localises to the membrane. This is an uncharacterized protein from Methanocaldococcus jannaschii (strain ATCC 43067 / DSM 2661 / JAL-1 / JCM 10045 / NBRC 100440) (Methanococcus jannaschii).